We begin with the raw amino-acid sequence, 312 residues long: Acetyl-coenzyme A carboxylase carboxyl transferase subunit alpha (312 aa).

The CoA carboxyltransferase C-terminal domain maps to 36 to 286 (RLDKEVKSIY…KEYFLDALRT (251 aa)).

This sequence belongs to the AccA family. In terms of assembly, acetyl-CoA carboxylase is a heterohexamer composed of biotin carboxyl carrier protein (AccB), biotin carboxylase (AccC) and two subunits each of ACCase subunit alpha (AccA) and ACCase subunit beta (AccD).

It localises to the cytoplasm. The catalysed reaction is N(6)-carboxybiotinyl-L-lysyl-[protein] + acetyl-CoA = N(6)-biotinyl-L-lysyl-[protein] + malonyl-CoA. Its pathway is lipid metabolism; malonyl-CoA biosynthesis; malonyl-CoA from acetyl-CoA: step 1/1. Component of the acetyl coenzyme A carboxylase (ACC) complex. First, biotin carboxylase catalyzes the carboxylation of biotin on its carrier protein (BCCP) and then the CO(2) group is transferred by the carboxyltransferase to acetyl-CoA to form malonyl-CoA. The sequence is that of Acetyl-coenzyme A carboxylase carboxyl transferase subunit alpha from Helicobacter pylori (strain HPAG1).